The chain runs to 500 residues: MPVQTAVVVLAAGAGTRMRSKTPKVLHTLGGRTMLAHSLHAAAEVDPAHLVTVVGHDKERVGAAVGALETELGRPITVAVQEEQNGTGHAVECGLSALPADFRGTVLVTAADVPLLDGHTLHALVDEHRSEPTPAAVTVLTFTAPEPTGYGRIVRLPHDGEIAEIVEEADATEEQAAITEVNAGVYAFDAEFLRTALGQLNANNAQGELYLTDVVKIARASGAPVFAAHLSDSAKVAGANDRVQLSRLAAELNRRTVENWMRAGVTVVDPSTTWIDVGVTLGRDVTIHPGVQLLGTTTVGEDAVIGPDTTLTDVSVGDGASVVRTHGSESTIGAGATVGPFSYLRPGTVLGASGKLGAFVETKNADIGAHSKVPHLTYVGDATIGEYSNIGASSVFVNYDGVAKSRTVVGSHVRTGSDTMFVAPVQVGDGAYTGAGTVLRFDVPPGALAVSGGKQRNIDGWVQRNRPGTPAAEAASAAGPHHSSDLHETEKQDLKDGIEQ.

Residues 1–242 (MPVQTAVVVL…SAKVAGANDR (242 aa)) are pyrophosphorylase. Residues 10-13 (LAAG), Lys-24, Gln-81, and 86-87 (GT) each bind UDP-N-acetyl-alpha-D-glucosamine. Asp-112 is a binding site for Mg(2+). UDP-N-acetyl-alpha-D-glucosamine-binding residues include Gly-151, Glu-167, Asn-182, and Asn-240. Asn-240 contacts Mg(2+). The tract at residues 243–263 (VQLSRLAAELNRRTVENWMRA) is linker. Residues 264–500 (GVTVVDPSTT…KQDLKDGIEQ (237 aa)) form an N-acetyltransferase region. UDP-N-acetyl-alpha-D-glucosamine-binding residues include Arg-345 and Lys-363. Catalysis depends on His-375, which acts as the Proton acceptor. The UDP-N-acetyl-alpha-D-glucosamine site is built by Tyr-378 and Asn-389. Acetyl-CoA is bound by residues Ala-392, 398–399 (NY), Ser-417, and Ala-435. Positions 459 to 500 (DGWVQRNRPGTPAAEAASAAGPHHSSDLHETEKQDLKDGIEQ) are disordered. Residues 482 to 500 (HSSDLHETEKQDLKDGIEQ) are compositionally biased toward basic and acidic residues.

It in the N-terminal section; belongs to the N-acetylglucosamine-1-phosphate uridyltransferase family. This sequence in the C-terminal section; belongs to the transferase hexapeptide repeat family. As to quaternary structure, homotrimer. The cofactor is Mg(2+).

Its subcellular location is the cytoplasm. The catalysed reaction is alpha-D-glucosamine 1-phosphate + acetyl-CoA = N-acetyl-alpha-D-glucosamine 1-phosphate + CoA + H(+). The enzyme catalyses N-acetyl-alpha-D-glucosamine 1-phosphate + UTP + H(+) = UDP-N-acetyl-alpha-D-glucosamine + diphosphate. It participates in nucleotide-sugar biosynthesis; UDP-N-acetyl-alpha-D-glucosamine biosynthesis; N-acetyl-alpha-D-glucosamine 1-phosphate from alpha-D-glucosamine 6-phosphate (route II): step 2/2. It functions in the pathway nucleotide-sugar biosynthesis; UDP-N-acetyl-alpha-D-glucosamine biosynthesis; UDP-N-acetyl-alpha-D-glucosamine from N-acetyl-alpha-D-glucosamine 1-phosphate: step 1/1. The protein operates within bacterial outer membrane biogenesis; LPS lipid A biosynthesis. Its function is as follows. Catalyzes the last two sequential reactions in the de novo biosynthetic pathway for UDP-N-acetylglucosamine (UDP-GlcNAc). The C-terminal domain catalyzes the transfer of acetyl group from acetyl coenzyme A to glucosamine-1-phosphate (GlcN-1-P) to produce N-acetylglucosamine-1-phosphate (GlcNAc-1-P), which is converted into UDP-GlcNAc by the transfer of uridine 5-monophosphate (from uridine 5-triphosphate), a reaction catalyzed by the N-terminal domain. The chain is Bifunctional protein GlmU from Rhodococcus opacus (strain B4).